Here is a 155-residue protein sequence, read N- to C-terminus: Endoribonuclease YbeY (155 aa).

Zn(2+) is bound by residues His-114, His-118, and His-124.

This sequence belongs to the endoribonuclease YbeY family. Zn(2+) is required as a cofactor.

It localises to the cytoplasm. In terms of biological role, single strand-specific metallo-endoribonuclease involved in late-stage 70S ribosome quality control and in maturation of the 3' terminus of the 16S rRNA. The chain is Endoribonuclease YbeY from Shigella dysenteriae serotype 1 (strain Sd197).